Reading from the N-terminus, the 417-residue chain is uncharacterized protein (417 aa).

Disordered regions lie at residues 1 to 41 (MDSE…EDQA) and 233 to 262 (QDSA…STRS). Basic and acidic residues predominate over residues 31–41 (DEDHIFHEDQA). Over residues 235-245 (SAYNDQAPSTS) the composition is skewed to polar residues.

This is an uncharacterized protein from Caenorhabditis elegans.